A 1060-amino-acid polypeptide reads, in one-letter code: MRIFSGDNKVVDSPASNPGLMSPSNFGGDFGSRLKVNVTSKKKLNDSSPTSPMESSPVSPELVPILTLLNAHTHRRYHEGVFLILQDLNNNGTHAARKWKDVYGVLLGTQLALWDAKELAEFTDPSCPVSEKKLKEVASKPTYINLTDATLRTLDNSDNIVMECGKNLTNALVVSTTLKNRYFLQFGNKESFNAWNSAIRLCLYECSSLQEAYTGAFISSRGAKLGDIRILLTNRKYDYKDWVSVRFGAGMPWKRCYAVISQSSSKKKGHFGEINLYENDKKVKKNHAMATIVEAKALYAVYPSSPKLIDSSTIIKVVGSVKFEKKESAQEKDVFIMPEKHQAVPSYDTIIRFLIPAMDTFKLYGRPEKLLSSKNDPHSLLFGLPVLPHIYYLEVEDLLPLTNSVSSLHWSNNEWKEHISDILQRKIAQGYCGCNSTSNITSPLPSPFLGSADLFERADGVLSPKLSYGSKSSSNNSSKNSLPKRERVKLSSSSEQDLNNSDSPSIKRESPPLVISESPHKVHTPTDASFRTRVTEGSPYAKQRHPKAFASSVNDSPSDRAKSRTVPYNNNDRKATTPEKFERGETSCGKNVDESLKKVRNMKLEIPESNFDKFMTDKNLLSVDSKSSNEKKLSVESDLSAIYEKYSNGPFGHTEGLNGSSDETYLRFQRASVHSESNYNSRKSFTPSDFSNGNEEEHAVLQELNSLTQRINELGMESINSNSDSDRINGSYSQVDFDNNNDEDDMNLFDPDFMAQDQLRAEERDYNKDDRTPLAKVPAAFQSTGLGITPDDDIERQYITEHRSRHEVPKRSPEKPSNPLEIGNPYAKPGTRLNTTHTHSKTDRSITPQRGQPVPSGQQISSYVQPANINSPNKMYGANNSAMGSPRNPKTRAPPGPYNQGWNNRPSPSNIYQRPHPSDTQPQAYHLPGNPYSTGNRPNMQAQYHPQQVPMPIPQQPNRPYQPYAMNTHMGSPGGYAGAAPPFQPANVNYNTRPQQPWPTPNSPSAHYRPPPNLNQPQNGSAGYYRPPAPQLQNSQARPQKKDGFSQFMPSATTKNPYAQ.

The tract at residues 1–29 is disordered; the sequence is MRIFSGDNKVVDSPASNPGLMSPSNFGGD. The PH domain maps to 75-204; sequence RRYHEGVFLI…WNSAIRLCLY (130 aa). Residues 465-481 are compositionally biased toward low complexity; the sequence is KLSYGSKSSSNNSSKNS. 3 disordered regions span residues 465–588, 718–742, and 801–1060; these read KLSY…ETSC, SINS…NNND, and EHRS…PYAQ. Polar residues predominate over residues 490–504; that stretch reads LSSSSEQDLNNSDSP. Phosphoserine occurs at positions 491, 510, 518, 538, and 556. The span at 571-588 shows a compositional bias: basic and acidic residues; sequence NDRKATTPEKFERGETSC. Residues 718 to 731 show a composition bias toward low complexity; sequence SINSNSDSDRINGS. Basic and acidic residues predominate over residues 801–814; that stretch reads EHRSRHEVPKRSPE. A compositionally biased stretch (polar residues) spans 845–883; that stretch reads SITPQRGQPVPSGQQISSYVQPANINSPNKMYGANNSAM. Phosphoserine is present on residues S871 and S885. Polar residues-rich tracts occupy residues 900 to 923, 931 to 945, and 1048 to 1060; these read QGWN…TQPQ, PYST…AQYH, and FMPS…PYAQ.

The protein belongs to the CAF120 family. In terms of assembly, subunit of the 1.0 MDa CCR4-NOT core complex that contains CCR4, CAF1, CAF120, NOT1, NOT2, NOT3, NOT4, NOT5, CAF40 and CAF130. In the complex interacts with NOT1. The core complex probably is part of a less characterized 1.9 MDa CCR4-NOT complex.

The protein resides in the cytoplasm. It is found in the nucleus. Its subcellular location is the bud neck. In terms of biological role, acts as a component of the CCR4-NOT core complex, which in the nucleus seems to be a general transcription factor, and in the cytoplasm the major mRNA deadenylase involved in mRNA turnover. The NOT protein subcomplex negatively regulates the basal and activated transcription of many genes. Preferentially affects TC-type TATA element-dependent transcription. Could directly or indirectly inhibit component(s) of the general transcription machinery. This chain is CCR4-NOT transcriptional complex subunit CAF120 (CAF120), found in Saccharomyces cerevisiae (strain YJM789) (Baker's yeast).